A 30-amino-acid polypeptide reads, in one-letter code: Cycloviolacin-H1 (30 aa).

Residues 1–30 (GIPCGESCVYIPCLTSAIGCSCKSKVCYRN) constitute a cross-link (cyclopeptide (Gly-Asn)). 3 disulfides stabilise this stretch: cysteine 4/cysteine 20, cysteine 8/cysteine 22, and cysteine 13/cysteine 27.

It belongs to the cyclotide family. Bracelet subfamily. Post-translationally, this is a cyclic peptide.

Its function is as follows. Probably participates in a plant defense mechanism. This Viola hederacea (Australian violet) protein is Cycloviolacin-H1.